The chain runs to 449 residues: Trigger factor (449 aa).

A PPIase FKBP-type domain is found at 172–257; it reads GDEVRFDFKG…IKEITNVKPQ (86 aa).

The protein belongs to the FKBP-type PPIase family. Tig subfamily.

It is found in the cytoplasm. The catalysed reaction is [protein]-peptidylproline (omega=180) = [protein]-peptidylproline (omega=0). Involved in protein export. Acts as a chaperone by maintaining the newly synthesized protein in an open conformation. Functions as a peptidyl-prolyl cis-trans isomerase. In Ureaplasma parvum serovar 3 (strain ATCC 27815 / 27 / NCTC 11736), this protein is Trigger factor.